Reading from the N-terminus, the 510-residue chain is MIWHVQNENFILDSTRIFMKAFHLLLFNGSFIFPECILIFGLILLLMIDSTSDQKDTPWLYFISSTSLVMSITALLFRWREEPMISFSGNFQTNNFNEIFQFLILLCSTLCIPLSVEYIECTEMAITEFLLFVLTATLGGMFLCGANDLITIFVAPECFSLCSYLLSGYTKRDVRSNEATTKYLLMGGASSSILVYGFSWLYGSSGGEIELQEIVNGLINTQMYNSPGISIALISITVGIGFKLSPAPFHQWTPDVYEGSPTPVVAFLSVTSKVAASASATRIFDIPFYFSSNEWHLLLEILAILSMILGNLIAITQTSMKRMLAYSSIGQIGYVIIGIIVGDSNDGYASMITYMLFYISMNLGTFACIVLFGLRTGTDNIRDYAGLYTKDPFSALSSALCLLSLGGIPPLAGFFGKLYLFWCGWQAGLYFLVSIGLLTSVVSIYYYLKIIKLLMTGRNKEITPHVRNYRRSPLRSNNSIELSMIVCVIASTIPGISMNPIIAIAQDTLF.

A run of 13 helical transmembrane segments spans residues 24–44, 57–77, 99–119, 124–144, 149–169, 183–203, 229–249, 295–315, 323–343, 354–374, 395–415, 418–438, and 484–504; these read LLLF…GLIL, TPWL…ALLF, IFQF…VEYI, MAIT…MFLC, LITI…LSGY, YLLM…WLYG, ISIA…PAPF, WHLL…LIAI, MLAY…IVGD, YMLF…LFGL, ALSS…AGFF, LYLF…IGLL, and MIVC…IIAI.

It belongs to the complex I subunit 2 family. In terms of assembly, NDH is composed of at least 16 different subunits, 5 of which are encoded in the nucleus.

It localises to the plastid. The protein localises to the chloroplast thylakoid membrane. It carries out the reaction a plastoquinone + NADH + (n+1) H(+)(in) = a plastoquinol + NAD(+) + n H(+)(out). The enzyme catalyses a plastoquinone + NADPH + (n+1) H(+)(in) = a plastoquinol + NADP(+) + n H(+)(out). Its function is as follows. NDH shuttles electrons from NAD(P)H:plastoquinone, via FMN and iron-sulfur (Fe-S) centers, to quinones in the photosynthetic chain and possibly in a chloroplast respiratory chain. The immediate electron acceptor for the enzyme in this species is believed to be plastoquinone. Couples the redox reaction to proton translocation, and thus conserves the redox energy in a proton gradient. This Nuphar advena (Common spatterdock) protein is NAD(P)H-quinone oxidoreductase subunit 2 A, chloroplastic.